The following is a 1043-amino-acid chain: MMPVYMDPSQPCQMRPQEYYYQGFGNNSQHMAMDAPPPCHGSCVHGNFPAYWPPCYPPQVPYHQCCMNRSAFHPPHASYAPSCYVHPPFPVGYQPWFDVEKDVPGKHHCGKCSSQMCDLKKDRGVVIEEHEPEIEKGEAVLPVRSTNCPYPIIWIPHENARNQEYRSSLGLGKHNQPPAEVRAPDNMTIQKSFPESWRGCFPFDESSMKSLVQNQDSKKAQNGKTVEAPFDISKFKSLLQGQDMKEAQIQKNKEELGQLTYPTSWVPSRRKRDDVEASESSNEDRKKMQNGKTVEYPFDISMIKSLIQGQDVKEAQNQKNKEEPGQVPYPIFWIPSYGKRKDVEASESKESSNEGRNLESCPSDLHRNEGQITQAKGKEGNFECNVLSDAEEKSSVINIPVANHLQEPRNIPVKLSENHLPKPTEPTKRIAKNEPVKSTKKEQSSSSSEASKLPPVCLRVDPLPKERNGGSKSVSHPKRMEKSKETKIAAPLSSKKAESRTVPEACNVKCEDANAEMKMAEGSLNALRTEKGSVESNSNLQEESNGEIIKPCEAKENREQPAKKSFTEEEAARIIQSMYRGYDVRRWEPIKKLKEIATVREQMGDVKKRIEALEASTDQHIEEKEIVVNGELVMNLLLKLDAVEGLHPSIREFRKALATELSSIQDKLDSLKNSCASAEKEAVKEQVEIKSQPSDSPVNLEHSQLTEENKMVSDTNLEKVLRLSPEEHPMSVLNRTDEKQAESAAETEEGYGLFETLATDSKQATENAAAASSTTIPEKIGEVETVVPGNPPSADGNGMTVTNVEENKAMVVESLEEPINELPQMVEETETNSIRDPENASEVSEAETNSSENENRKGEDDIVLHSEKNVELSELPVGVIDEETQPLSQDPSSSYTREGNMTAMDPKTASQEETEVDHSPNNSKGIGQQTSEPQDEKEQSPETEVIVKEQPLETEVILNEQAPEPEITEPGISKETKKLMEENQRFKETMETLVKAGREQLEVISKLTSRVKSLEKKLSHKKKTQIRRRASKPMSVSPTDAVL.

Disordered regions lie at residues 253–294 (KEEL…GKTV), 311–331 (DVKE…PYPI), 343–366 (VEAS…SDLH), 410–500 (NIPV…AESR), and 533–566 (SVES…KKSF). 4 stretches are compositionally biased toward basic and acidic residues: residues 311-324 (DVKE…KEEP), 343-357 (VEAS…EGRN), 416-443 (SENH…KKEQ), and 478-487 (KRMEKSKETK). Over residues 534–543 (VESNSNLQEE) the composition is skewed to polar residues. Over residues 550-566 (KPCEAKENREQPAKKSF) the composition is skewed to basic and acidic residues. The IQ domain occupies 568–597 (EEEAARIIQSMYRGYDVRRWEPIKKLKEIA). One can recognise a BAG domain in the interval 595-672 (EIATVREQMG…SIQDKLDSLK (78 aa)). Residues 724–741 (SPEEHPMSVLNRTDEKQA) are compositionally biased toward basic and acidic residues. Disordered regions lie at residues 724 to 749 (SPEE…ETEE), 764 to 799 (ATEN…GNGM), 817 to 975 (EPIN…ISKE), and 1015 to 1043 (EKKL…DAVL). Low complexity predominate over residues 840-852 (ASEVSEAETNSSE). Basic and acidic residues predominate over residues 853 to 871 (NENRKGEDDIVLHSEKNVE). Composition is skewed to polar residues over residues 885 to 899 (QPLS…TREG) and 919 to 932 (SPNN…QTSE). Basic and acidic residues predominate over residues 934 to 951 (QDEKEQSPETEVIVKEQP). The stretch at 971-1024 (GISKETKKLMEENQRFKETMETLVKAGREQLEVISKLTSRVKSLEKKLSHKKKT) forms a coiled coil. Over residues 1018–1031 (LSHKKKTQIRRRAS) the composition is skewed to basic residues. The span at 1034-1043 (MSVSPTDAVL) shows a compositional bias: polar residues.

Binds to the ATPase domain of HSP70/HSC70 chaperones. Interacts with calmodulins CAM1, CAM2, CAM3, CAM4, CAM6 and CAM7. Interacts with BAGP1 and APCB1. As to expression, detected in stems, leaves, flowers and roots.

In terms of biological role, co-chaperone that regulates diverse cellular pathways, such as programmed cell death and stress responses. Involved in plant basal resistance. Involved in basal heat response through the regulation of the heat induced small HSP (sHSP) transcriptional cascade. Functionally, induces autophagy. In Arabidopsis thaliana (Mouse-ear cress), this protein is BAG family molecular chaperone regulator 6.